We begin with the raw amino-acid sequence, 225 residues long: Endonuclease V (225 aa).

Mg(2+) contacts are provided by Asp-43 and Asp-110.

It belongs to the endonuclease V family. Mg(2+) serves as cofactor.

It is found in the cytoplasm. It carries out the reaction Endonucleolytic cleavage at apurinic or apyrimidinic sites to products with a 5'-phosphate.. Its function is as follows. DNA repair enzyme involved in the repair of deaminated bases. Selectively cleaves double-stranded DNA at the second phosphodiester bond 3' to a deoxyinosine leaving behind the intact lesion on the nicked DNA. This is Endonuclease V from Thermotoga sp. (strain RQ2).